The following is a 1101-amino-acid chain: Rho GTPase-activating protein 30 (1101 aa).

In terms of domain architecture, Rho-GAP spans 20-215; it reads CDLREHLQHS…FILTHVDQLF (196 aa). Disordered stretches follow at residues 305–397 and 450–499; these read RKLP…VRAL and LQPR…LEDS. A compositionally biased stretch (basic and acidic residues) spans 309-319; that stretch reads LRVEDREEKSS. Residues 348–367 show a composition bias toward low complexity; the sequence is SSSSQPSSLMPESLESNSME. The span at 451 to 465 shows a compositional bias: pro residues; the sequence is QPRPSPALGPGPPGS. Serine 578 carries the phosphoserine modification. The disordered stretch occupies residues 622 to 848; that stretch reads LGPKPINWEG…EQKSIDVETE (227 aa). 4 stretches are compositionally biased toward basic and acidic residues: residues 659 to 677, 686 to 762, 786 to 821, and 829 to 844; these read TRQEKEAKPRSTSDNREEA, EAGK…KGDD, EVVHKHEAEKGRESETKELRRKSDLKSREDQGHSED, and DDRKEGVFSKEQKSID. Serine 875 is modified (phosphoserine). Disordered stretches follow at residues 878-901 and 968-987; these read EINEQTSEMKQAPLQPSEPEGMEA and CPRPGRLDGTPGEKAWGSRA. Phosphoserine is present on serine 996. The tract at residues 1044-1076 is disordered; the sequence is SRPLSCLERPPEGTEGSEPRSRLSLPPRELHPV. Residues 1052–1064 show a composition bias toward basic and acidic residues; that stretch reads RPPEGTEGSEPRS.

In terms of assembly, interacts with RHOU in a GTP-independent manner.

The protein resides in the cytoplasmic vesicle. Functionally, GTPase-activating protein (GAP) for RAC1 and RHOA, but not for CDC42. In Mus musculus (Mouse), this protein is Rho GTPase-activating protein 30 (Arhgap30).